The following is a 442-amino-acid chain: MSEIASLQDTIFALSSGRLPSGVAVVRISGPKVRFVLETIVGSIPTPRYAAYKLFRSRNGDPIDRGLALFFPGPNSFTGEDCAEFHLHGGKAVVEKLLSEMGELHGCRIAEAGEFTRRAFSNGKMDLTIAEGLADLIAAETEGQRRLALQVASGTQRELYTEWRQRLLRARAFIEAELDFADESDVPGSVSEQVWQSLALLKSEIENHIASGKRASMLRDGLHVVIVGAPNAGKSSLLNFLAGREVAIISEEAGTTRDLLEVKLDLGGIPVYVTDTAGLRETDSSVEKIGIERARARMADADLVLLLEDMNDPIAVASDEIPEALWKIGTKADLNAESADCWTYRISTKTGEGLDQLLTNLQNFAEEQIGQIEDAVPTRQRHINLLRSTVTEIDRAINGTNLPLELRAENMRLASQYLGRITGDVDVEEILDVIFSQFCIGK.

(6S)-5-formyl-5,6,7,8-tetrahydrofolate is bound by residues R27, E84, and K124. The TrmE-type G domain occupies 221 to 366 (GLHVVIVGAP…LLTNLQNFAE (146 aa)). Residues 231–236 (NAGKSS), 250–256 (SEEAGTT), and 275–278 (DTAG) each bind GTP. S235 and T256 together coordinate Mg(2+). (6S)-5-formyl-5,6,7,8-tetrahydrofolate is bound at residue K442.

Belongs to the TRAFAC class TrmE-Era-EngA-EngB-Septin-like GTPase superfamily. TrmE GTPase family. Homodimer. Heterotetramer of two MnmE and two MnmG subunits. Requires K(+) as cofactor.

Its subcellular location is the cytoplasm. In terms of biological role, exhibits a very high intrinsic GTPase hydrolysis rate. Involved in the addition of a carboxymethylaminomethyl (cmnm) group at the wobble position (U34) of certain tRNAs, forming tRNA-cmnm(5)s(2)U34. This Brucella anthropi (strain ATCC 49188 / DSM 6882 / CCUG 24695 / JCM 21032 / LMG 3331 / NBRC 15819 / NCTC 12168 / Alc 37) (Ochrobactrum anthropi) protein is tRNA modification GTPase MnmE.